We begin with the raw amino-acid sequence, 176 residues long: Large ribosomal subunit protein uL6 (176 aa).

Belongs to the universal ribosomal protein uL6 family. As to quaternary structure, part of the 50S ribosomal subunit.

Its function is as follows. This protein binds to the 23S rRNA, and is important in its secondary structure. It is located near the subunit interface in the base of the L7/L12 stalk, and near the tRNA binding site of the peptidyltransferase center. The sequence is that of Large ribosomal subunit protein uL6 from Burkholderia cenocepacia (strain HI2424).